The sequence spans 191 residues: MSNINVIDILKESDALLEGHFLLSSGRHSNRYCQCAKLLQCPQKSEKVISVIAEKLKEVDFNIIVGPAMGGVIVSYELARQTNKPGIFAERKEGVMCIRRGFEIKKGDKVIISEDVVTTGKSSLEVAKVIEEMGGEVVGIACIVDRRAEDVKTNYPIYSACKLEIETYEKDNCELCKKNIPFVKPGSREQK.

Position 114–122 (114–122) interacts with 5-phospho-alpha-D-ribose 1-diphosphate; it reads EDVVTTGKS. Thr118 and Arg146 together coordinate orotate.

This sequence belongs to the purine/pyrimidine phosphoribosyltransferase family. PyrE subfamily. In terms of assembly, homodimer. The cofactor is Mg(2+).

It carries out the reaction orotidine 5'-phosphate + diphosphate = orotate + 5-phospho-alpha-D-ribose 1-diphosphate. It participates in pyrimidine metabolism; UMP biosynthesis via de novo pathway; UMP from orotate: step 1/2. Catalyzes the transfer of a ribosyl phosphate group from 5-phosphoribose 1-diphosphate to orotate, leading to the formation of orotidine monophosphate (OMP). The chain is Orotate phosphoribosyltransferase from Clostridium botulinum (strain Langeland / NCTC 10281 / Type F).